A 169-amino-acid polypeptide reads, in one-letter code: Protein Flattop homolog (169 aa).

The interval 53-169 (IPRSSRSPWG…SPKLATPEPC (117 aa)) is disordered. Polar residues predominate over residues 119–130 (VQASPRNASPLQ).

It belongs to the Flattop family.

It is found in the cytoplasm. The protein localises to the cytoskeleton. The protein resides in the cilium basal body. It localises to the cell projection. Its subcellular location is the cilium. It is found in the apical cell membrane. Its function is as follows. Acts as a regulator of cilium basal body docking and positioning in mono- and multiciliated cells. This Nematostella vectensis (Starlet sea anemone) protein is Protein Flattop homolog.